The primary structure comprises 526 residues: Probable feruloyl esterase B-1 (526 aa).

Positions 1–19 (MPSLRRLLPFLAAGSAALA) are cleaved as a signal peptide. Disulfide bonds link C28–C75 and C63–C114. 4 N-linked (GlcNAc...) asparagine glycosylation sites follow: N53, N85, N98, and N138. 3 disulfide bridges follow: C187/C441, C256/C273, and C282/C291. The active-site Acyl-ester intermediate is the S188. The N-linked (GlcNAc...) asparagine glycan is linked to N246. Ca(2+) contacts are provided by D257, D260, A262, D264, and I266. 2 N-linked (GlcNAc...) asparagine glycosylation sites follow: N287 and N311. Catalysis depends on charge relay system residues D400 and H440. N-linked (GlcNAc...) asparagine glycosylation is found at N490 and N516. C503 and C525 are joined by a disulfide.

This sequence belongs to the tannase family.

Its subcellular location is the secreted. The enzyme catalyses feruloyl-polysaccharide + H2O = ferulate + polysaccharide.. In terms of biological role, involved in degradation of plant cell walls. Hydrolyzes the feruloyl-arabinose ester bond in arabinoxylans as well as the feruloyl-galactose and feruloyl-arabinose ester bonds in pectin. This is Probable feruloyl esterase B-1 (faeB-1) from Aspergillus flavus (strain ATCC 200026 / FGSC A1120 / IAM 13836 / NRRL 3357 / JCM 12722 / SRRC 167).